A 292-amino-acid chain; its full sequence is Arabinose operon regulatory protein (292 aa).

Positions 8, 24, 38, 82, and 93 each coordinate alpha-L-arabinopyanose. Positions 180–279 constitute an HTH araC/xylS-type domain; sequence REACQYISDH…GASPSEFRAG (100 aa). 2 consecutive DNA-binding regions (H-T-H motif) follow at residues 198 to 219 and 246 to 269; these read ASVA…RQQL and IATV…KKCT.

In terms of assembly, homodimer.

The protein localises to the cytoplasm. With respect to regulation, arabinose converts the repressor form of AraC to the activator form to regulate the araBAD promoter. In the absence of arabinose, AraC binds to the araO2 and araI1 half-sites in the promoter region of the araBAD operon, leading to the formation of a DNA loop that blocks access of RNA polymerase to the promoter. In the presence of arabinose and the cyclic AMP receptor protein (CRP), it binds to the adjacent half-sites araI1 and araI2, leading to the binding of RNA polymerase to the promoter region and transcription of the araBAD operon. AraI1 acts as a switch mechanism allowing both the repressor and the activator forms of AraC protein to regulate the araBAD promoter. Inhibited by D-fucose, which binds competitively to the same site on the protein. Its function is as follows. Transcription factor that regulates the expression of several genes involved in the transport and metabolism of L-arabinose. Functions both as a positive and a negative regulator. In the presence of arabinose, activates the expression of the araBAD, araE, araFGH and araJ promoters. In the absence of arabinose, negatively regulates the araBAD operon. Represses its own transcription. Acts by binding directly to DNA. The protein is Arabinose operon regulatory protein of Escherichia coli (strain K12).